Consider the following 89-residue polypeptide: Neuropeptide S (89 aa).

The signal sequence occupies residues Met-1 to Cys-23. Residues His-24–Met-67 constitute a propeptide that is removed on maturation.

The protein resides in the secreted. Its function is as follows. Modulates arousal and anxiety. May play an important anorexigenic role. Binds to its receptor NPSR1 with nanomolar affinity to increase intracellular calcium concentrations. In Bos taurus (Bovine), this protein is Neuropeptide S (NPS).